We begin with the raw amino-acid sequence, 664 residues long: tRNA (carboxymethyluridine(34)-5-O)-methyltransferase ALKBH8 (664 aa).

The region spanning 43–120 (QSLVVANGGL…QKIILYLNFV (78 aa)) is the RRM domain. The Fe2OG dioxygenase domain occupies 220–337 (KPDQMTINQY…RTSFTFRKVR (118 aa)). 227 to 229 (NQY) lines the 2-oxoglutarate pocket. Fe cation contacts are provided by His-238 and Asp-240. His-242 is a Zn(2+) binding site. His-292 is a Fe cation binding site. Positions 328 and 334 each coordinate 2-oxoglutarate. Cys-341, Cys-343, and Cys-349 together coordinate Zn(2+). The segment at 411 to 664 (ADIGCGNGKY…GNWCVILQKA (254 aa)) is methyltransferase domain. The tract at residues 516–575 (KYLKGNRNSQGKKEEMNSDTSVQRSLVEQMPDMGSRDSASSVPRINDSQEGGCNSRQVSN) is disordered. A compositionally biased stretch (polar residues) spans 552 to 575 (DSASSVPRINDSQEGGCNSRQVSN).

This sequence belongs to the alkB family. In terms of assembly, interacts with TRMT112. Fe(2+) serves as cofactor.

It is found in the cytoplasm. The protein localises to the nucleus. It carries out the reaction 5-(carboxymethyl)uridine(34) in tRNA + S-adenosyl-L-methionine = 5-(2-methoxy-2-oxoethyl)uridine(34) in tRNA + S-adenosyl-L-homocysteine. In terms of biological role, catalyzes the methylation of 5-carboxymethyl uridine to 5-methylcarboxymethyl uridine at the wobble position of the anticodon loop in tRNA via its methyltransferase domain. Catalyzes the last step in the formation of 5-methylcarboxymethyl uridine at the wobble position of the anticodon loop in target tRNA. Has a preference for tRNA(Arg) and tRNA(Glu), and does not bind tRNA(Lys). Binds tRNA and catalyzes the iron and alpha-ketoglutarate dependent hydroxylation of 5-methylcarboxymethyl uridine at the wobble position of the anticodon loop in tRNA via its dioxygenase domain, giving rise to 5-(S)-methoxycarbonylhydroxymethyluridine; has a preference for tRNA(Gly). Required for normal survival after DNA damage. May inhibit apoptosis and promote cell survival and angiogenesis. This chain is tRNA (carboxymethyluridine(34)-5-O)-methyltransferase ALKBH8 (ALKBH8), found in Macaca fascicularis (Crab-eating macaque).